The primary structure comprises 515 residues: Protein translocase subunit SecD (515 aa).

The next 6 membrane-spanning stretches (helical) occupy residues 5–25, 353–373, 375–395, 398–418, 450–470, and 477–497; these read LIAKLLLIAAVIGFCIHLATP, KGILSVTIGMALVLLFMVAYY, LSGLLANMALLMNLIILMGLL, FGATLTLPGIAGIILTIGIAV, FSTILDANITTLIVAVILFQF, and GFAVTLSIGILASMFTAILCT.

It belongs to the SecD/SecF family. SecD subfamily. Forms a complex with SecF. Part of the essential Sec protein translocation apparatus which comprises SecA, SecYEG and auxiliary proteins SecDF. Other proteins may also be involved.

It is found in the cell inner membrane. Part of the Sec protein translocase complex. Interacts with the SecYEG preprotein conducting channel. SecDF uses the proton motive force (PMF) to complete protein translocation after the ATP-dependent function of SecA. This chain is Protein translocase subunit SecD, found in Desulfurispirillum indicum (strain ATCC BAA-1389 / DSM 22839 / S5).